Here is a 338-residue protein sequence, read N- to C-terminus: Tetraacyldisaccharide 4'-kinase (338 aa).

Residue 51-58 (HVGGAGKT) coordinates ATP.

It belongs to the LpxK family.

The catalysed reaction is a lipid A disaccharide + ATP = a lipid IVA + ADP + H(+). It participates in glycolipid biosynthesis; lipid IV(A) biosynthesis; lipid IV(A) from (3R)-3-hydroxytetradecanoyl-[acyl-carrier-protein] and UDP-N-acetyl-alpha-D-glucosamine: step 6/6. In terms of biological role, transfers the gamma-phosphate of ATP to the 4'-position of a tetraacyldisaccharide 1-phosphate intermediate (termed DS-1-P) to form tetraacyldisaccharide 1,4'-bis-phosphate (lipid IVA). The protein is Tetraacyldisaccharide 4'-kinase of Bradyrhizobium diazoefficiens (strain JCM 10833 / BCRC 13528 / IAM 13628 / NBRC 14792 / USDA 110).